The chain runs to 123 residues: Small ribosomal subunit protein bS18 (123 aa).

A compositionally biased stretch (polar residues) spans 1–10 (MADETTVSTP). The tract at residues 1-52 (MADETTVSTPAASGTETPSTGGGGAPQGRPQGGPRGDRGPRPGGSGRDGGRK) is disordered. The span at 20 to 34 (TGGGGAPQGRPQGGP) shows a compositional bias: gly residues.

It belongs to the bacterial ribosomal protein bS18 family. As to quaternary structure, part of the 30S ribosomal subunit. Forms a tight heterodimer with protein bS6.

Binds as a heterodimer with protein bS6 to the central domain of the 16S rRNA, where it helps stabilize the platform of the 30S subunit. The protein is Small ribosomal subunit protein bS18 of Koribacter versatilis (strain Ellin345).